The following is a 253-amino-acid chain: uncharacterized protein (253 aa).

Residues Gly-45, 66–67, 94–95, and Arg-110 each bind S-adenosyl-L-methionine; these read DA and AE.

It belongs to the methyltransferase superfamily.

This is an uncharacterized protein from Bacillus subtilis (strain 168).